An 89-amino-acid polypeptide reads, in one-letter code: Small ribosomal subunit protein uS17 (89 aa).

Belongs to the universal ribosomal protein uS17 family. In terms of assembly, part of the 30S ribosomal subunit.

One of the primary rRNA binding proteins, it binds specifically to the 5'-end of 16S ribosomal RNA. The sequence is that of Small ribosomal subunit protein uS17 from Coxiella burnetii (strain Dugway 5J108-111).